We begin with the raw amino-acid sequence, 336 residues long: Anthranilate phosphoribosyltransferase (336 aa).

5-phospho-alpha-D-ribose 1-diphosphate-binding positions include Gly-82, 85–86 (GD), Thr-90, 92–95 (NIST), 110–118 (KHGNRFASG), and Ser-122. Residue Gly-82 coordinates anthranilate. Ser-94 is a binding site for Mg(2+). Asn-113 serves as a coordination point for anthranilate. Arg-168 is an anthranilate binding site. 2 residues coordinate Mg(2+): Asp-227 and Glu-228.

The protein belongs to the anthranilate phosphoribosyltransferase family. In terms of assembly, homodimer. Requires Mg(2+) as cofactor.

The catalysed reaction is N-(5-phospho-beta-D-ribosyl)anthranilate + diphosphate = 5-phospho-alpha-D-ribose 1-diphosphate + anthranilate. It participates in amino-acid biosynthesis; L-tryptophan biosynthesis; L-tryptophan from chorismate: step 2/5. Its function is as follows. Catalyzes the transfer of the phosphoribosyl group of 5-phosphorylribose-1-pyrophosphate (PRPP) to anthranilate to yield N-(5'-phosphoribosyl)-anthranilate (PRA). The chain is Anthranilate phosphoribosyltransferase from Desulfitobacterium hafniense (strain Y51).